A 209-amino-acid chain; its full sequence is Uracil phosphoribosyltransferase (209 aa).

5-phospho-alpha-D-ribose 1-diphosphate-binding positions include R79, R104, and 131–139 (DPMLATGGS). Residues I194 and 199–201 (GDA) each bind uracil. Residue D200 participates in 5-phospho-alpha-D-ribose 1-diphosphate binding.

It belongs to the UPRTase family. The cofactor is Mg(2+).

The catalysed reaction is UMP + diphosphate = 5-phospho-alpha-D-ribose 1-diphosphate + uracil. It functions in the pathway pyrimidine metabolism; UMP biosynthesis via salvage pathway; UMP from uracil: step 1/1. Its activity is regulated as follows. Allosterically activated by GTP. In terms of biological role, catalyzes the conversion of uracil and 5-phospho-alpha-D-ribose 1-diphosphate (PRPP) to UMP and diphosphate. This Geobacter sulfurreducens (strain ATCC 51573 / DSM 12127 / PCA) protein is Uracil phosphoribosyltransferase.